The primary structure comprises 324 residues: Glycerol-3-phosphate dehydrogenase [NAD(P)+] (324 aa).

4 residues coordinate NADPH: Ser10, Phe11, Arg31, and Lys106. The sn-glycerol 3-phosphate site is built by Lys106, Gly134, and Ser136. NADPH is bound at residue Ala138. Positions 189, 244, 254, 255, and 256 each coordinate sn-glycerol 3-phosphate. The active-site Proton acceptor is the Lys189. Arg255 serves as a coordination point for NADPH. NADPH is bound by residues Ile279 and Glu281.

It belongs to the NAD-dependent glycerol-3-phosphate dehydrogenase family.

The protein localises to the cytoplasm. The catalysed reaction is sn-glycerol 3-phosphate + NAD(+) = dihydroxyacetone phosphate + NADH + H(+). It carries out the reaction sn-glycerol 3-phosphate + NADP(+) = dihydroxyacetone phosphate + NADPH + H(+). The protein operates within membrane lipid metabolism; glycerophospholipid metabolism. In terms of biological role, catalyzes the reduction of the glycolytic intermediate dihydroxyacetone phosphate (DHAP) to sn-glycerol 3-phosphate (G3P), the key precursor for phospholipid synthesis. This is Glycerol-3-phosphate dehydrogenase [NAD(P)+] from Ehrlichia canis (strain Jake).